Here is a 176-residue protein sequence, read N- to C-terminus: Pro-glucagon (176 aa).

An N-terminal signal peptide occupies residues methionine 1 to glutamine 20. Over residues asparagine 25–alanine 35 the composition is skewed to polar residues. Residues asparagine 25–threonine 59 are disordered. Serine 54 carries the post-translational modification Phosphoserine. The propeptide occupies asparagine 84 to alanine 89. 2 positions are modified to phosphoserine: serine 105 and serine 108. Arginine 127 carries the post-translational modification Arginine amide. Residues aspartate 131–arginine 145 constitute a propeptide that is removed on maturation. 2 positions are modified to phosphoserine: serine 150 and serine 152.

Belongs to the glucagon family. In terms of processing, proglucagon is post-translationally processed in a tissue-specific manner in pancreatic A cells and intestinal L cells. In pancreatic A cells, the major bioactive hormone is glucagon cleaved by PCSK2/PC2. In the intestinal L cells PCSK1/PC1 liberates GLP-1, GLP-2, glicentin and oxyntomodulin. GLP-1 is further N-terminally truncated by post-translational processing in the intestinal L cells resulting in GLP-1(7-37) GLP-1-(7-36)amide. The C-terminal amidation is neither important for the metabolism of GLP-1 nor for its effects on the endocrine pancreas. As to expression, glucagon is secreted in the A cells of the islets of Langerhans. GLP-1, GLP-2, oxyntomodulin and glicentin are secreted from enteroendocrine cells throughout the gastrointestinal tract. GLP-1 and GLP-2 are also secreted in selected neurons in the brain.

The protein localises to the secreted. Plays a key role in glucose metabolism and homeostasis. Regulates blood glucose by increasing gluconeogenesis and decreasing glycolysis. A counterregulatory hormone of insulin, raises plasma glucose levels in response to insulin-induced hypoglycemia. Plays an important role in initiating and maintaining hyperglycemic conditions in diabetes. Its function is as follows. Potent stimulator of glucose-dependent insulin release. Also stimulates insulin release in response to IL6. Plays important roles on gastric motility and the suppression of plasma glucagon levels. May be involved in the suppression of satiety and stimulation of glucose disposal in peripheral tissues, independent of the actions of insulin. Has growth-promoting activities on intestinal epithelium. May also regulate the hypothalamic pituitary axis (HPA) via effects on LH, TSH, CRH, oxytocin, and vasopressin secretion. Increases islet mass through stimulation of islet neogenesis and pancreatic beta cell proliferation. Inhibits beta cell apoptosis. In terms of biological role, stimulates intestinal growth and up-regulates villus height in the small intestine, concomitant with increased crypt cell proliferation and decreased enterocyte apoptosis. The gastrointestinal tract, from the stomach to the colon is the principal target for GLP-2 action. Plays a key role in nutrient homeostasis, enhancing nutrient assimilation through enhanced gastrointestinal function, as well as increasing nutrient disposal. Stimulates intestinal glucose transport and decreases mucosal permeability. Functionally, significantly reduces food intake. Inhibits gastric emptying in humans. Suppression of gastric emptying may lead to increased gastric distension, which may contribute to satiety by causing a sensation of fullness. May modulate gastric acid secretion and the gastro-pyloro-duodenal activity. May play an important role in intestinal mucosal growth in the early period of life. In Ovis aries (Sheep), this protein is Pro-glucagon (GCG).